We begin with the raw amino-acid sequence, 238 residues long: Probable transcriptional regulatory protein SPD_1725 (238 aa).

The protein belongs to the TACO1 family. YeeN subfamily.

It is found in the cytoplasm. The polypeptide is Probable transcriptional regulatory protein SPD_1725 (Streptococcus pneumoniae serotype 2 (strain D39 / NCTC 7466)).